The sequence spans 82 residues: Sec-independent protein translocase protein TatA (82 aa).

The chain crosses the membrane as a helical span at residues 1–21 (MGGISIWQLLIIAVIIVLLFG). The segment at 48–82 (PAKEAKKDADFVPQNLEKKEAETVEKQKQNDKEQA) is disordered.

Belongs to the TatA/E family. As to quaternary structure, the Tat system comprises two distinct complexes: a TatABC complex, containing multiple copies of TatA, TatB and TatC subunits, and a separate TatA complex, containing only TatA subunits. Substrates initially bind to the TatABC complex, which probably triggers association of the separate TatA complex to form the active translocon.

Its subcellular location is the cell inner membrane. Its function is as follows. Part of the twin-arginine translocation (Tat) system that transports large folded proteins containing a characteristic twin-arginine motif in their signal peptide across membranes. TatA could form the protein-conducting channel of the Tat system. This Aliivibrio fischeri (strain ATCC 700601 / ES114) (Vibrio fischeri) protein is Sec-independent protein translocase protein TatA.